The primary structure comprises 233 residues: Pyridoxal phosphate homeostasis protein (233 aa).

Lysine 35 is subject to N6-(pyridoxal phosphate)lysine.

Belongs to the pyridoxal phosphate-binding protein YggS/PROSC family.

Its function is as follows. Pyridoxal 5'-phosphate (PLP)-binding protein, which is involved in PLP homeostasis. The sequence is that of Pyridoxal phosphate homeostasis protein from Pasteurella multocida (strain Pm70).